Here is a 312-residue protein sequence, read N- to C-terminus: Urease accessory protein UreD (312 aa).

Belongs to the UreD family. UreD, UreF and UreG form a complex that acts as a GTP-hydrolysis-dependent molecular chaperone, activating the urease apoprotein by helping to assemble the nickel containing metallocenter of UreC. The UreE protein probably delivers the nickel.

The protein resides in the cytoplasm. In terms of biological role, required for maturation of urease via the functional incorporation of the urease nickel metallocenter. This is Urease accessory protein UreD from Marinomonas sp. (strain MWYL1).